The sequence spans 1691 residues: MASWTSPWWVLIGMVFMHSPLPQTTAEKSPGAYFLPEFALSPQGSFLEDTTGEQFLTYRYDDQTSRNTRSDEDKDGNWDAWGDWSDCSRTCGGGASYSLRRCLTGRNCEGQNIRYKTCSNHDCPPDAEDFRAQQCSAYNDVQYQGHYYEWLPRYNDPAAPCALKCHAQGQNLVVELAPKVLDGTRCNTDSLDMCISGICQAVGCDRQLGSNAKEDNCGVCAGDGSTCRLVRGQSKSHVSPEKREENVIAVPLGSRSVRITVKGPAHLFIESKTLQGSKGEHSFNSPGVFLVENTTVEFQRGSERQTFKIPGPLMADFIFKTRYTAAKDSVVQFFFYQPISHQWRQTDFFPCTVTCGGGYQLNSAECVDIRLKRVVPDHYCHYYPENVKPKPKLKECSMDPCPSSDGFKEIMPYDHFQPLPRWEHNPWTACSVSCGGGIQRRSFVCVEESMHGEILQVEEWKCMYAPKPKVMQTCNLFDCPKWIAMEWSQCTVTCGRGLRYRVVLCINHRGEHVGGCNPQLKLHIKEECVIPIPCYKPKEKSPVEAKLPWLKQAQELEETRIATEEPTFIPEPWSACSTTCGPGVQVREVKCRVLLTFTQTETELPEEECEGPKLPTERPCLLEACDESPASRELDIPLPEDSETTYDWEYAGFTPCTATCVGGHQEAIAVCLHIQTQQTVNDSLCDMVHRPPAMSQACNTEPCPPRWHVGSWGPCSATCGVGIQTRDVYCLHPGETPAPPEECRDEKPHALQACNQFDCPPGWHIEEWQQCSRTCGGGTQNRRVTCRQLLTDGSFLNLSDELCQGPKASSHKSCARTDCPPHLAVGDWSKCSVSCGVGIQRRKQVCQRLAAKGRRIPLSEMMCRDLPGLPLVRSCQMPECSKIKSEMKTKLGEQGPQILSVQRVYIQTREEKRINLTIGSRAYLLPNTSVIIKCPVRRFQKSLIQWEKDGRCLQNSKRLGITKSGSLKIHGLAAPDIGVYRCIAGSAQETVVLKLIGTDNRLIARPALREPMREYPGMDHSEANSLGVTWHKMRQMWNNKNDLYLDDDHISNQPFLRALLGHCSNSAGSTNSWELKNKQFEAAVKQGAYSMDTAQFDELIRNMSQLMETGEVSDDLASQLIYQLVAELAKAQPTHMQWRGIQEETPPAAQLRGETGSVSQSSHAKNSGKLTFKPKGPVLMRQSQPPSISFNKTINSRIGNTVYITKRTEVINILCDLITPSEATYTWTKDGTLLQPSVKIILDGTGKIQIQNPTRKEQGIYECSVANHLGSDVESSSVLYAEAPVILSVERNITKPEHNHLSVVVGGIVEAALGANVTIRCPVKGVPQPNITWLKRGGSLSGNVSLLFNGSLLLQNVSLENEGTYVCIATNALGKAVATSVLHLLERRWPESRIVFLQGHKKYILQATNTRTNSNDPTGEPPPQEPFWEPGNWSHCSATCGHLGARIQRPQCVMANGQEVSEALCDHLQKPLAGFEPCNIRDCPARWFTSVWSQCSVSCGEGYHSRQVTCKRTKANGTVQVVSPRACAPKDRPLGRKPCFGHPCVQWEPGNRCPGRCMGRAVRMQQRHTACQHNSSDSNCDDRKRPTLRRNCTSGACDVCWHTGPWKPCTAACGRGFQSRKVDCIHTRSCKPVAKRHCVQKKKPISWRHCLGPSCDRDCTDTTHYCMFVKHLNLCSLDRYKQRCCQSCQEG.

Residues 1–26 (MASWTSPWWVLIGMVFMHSPLPQTTA) form the signal peptide. The 50-residue stretch at 75–124 (DGNWDAWGDWSDCSRTCGGGASYSLRRCLTGRNCEGQNIRYKTCSNHDCP) folds into the TSP type-1 1 domain. 3 disulfide bridges follow: cysteine 87–cysteine 118, cysteine 91–cysteine 123, and cysteine 102–cysteine 108. The N-linked (GlcNAc...) asparagine glycan is linked to asparagine 293. TSP type-1 domains follow at residues 418–468 (PLPR…APKP), 478–535 (DCPK…IPCY), and 564–626 (EEPT…EACD). 3 disulfide bridges follow: cysteine 576–cysteine 620, cysteine 580–cysteine 625, and cysteine 591–cysteine 609. Asparagine 681 carries an N-linked (GlcNAc...) asparagine glycan. TSP type-1 domains lie at 703–760 (CPPR…FDCP), 763–818 (WHIE…ARTD), and 819–881 (CPPH…PECS). N-linked (GlcNAc...) asparagine glycosylation is present at asparagine 797. Intrachain disulfides connect cysteine 831–cysteine 875, cysteine 835–cysteine 880, and cysteine 846–cysteine 863. Residues 896-992 (PQILSVQRVY…IAGSAQETVV (97 aa)) form the Ig-like C2-type 1 domain. N-linked (GlcNAc...) asparagine glycosylation is found at asparagine 915 and asparagine 927. Cysteine 934 and cysteine 982 are disulfide-bonded. N-linked (GlcNAc...) asparagine glycosylation occurs at asparagine 1102. The interval 1146–1184 (PPAAQLRGETGSVSQSSHAKNSGKLTFKPKGPVLMRQSQ) is disordered. The segment covering 1156–1169 (GSVSQSSHAKNSGK) has biased composition (polar residues). The 95-residue stretch at 1185–1279 (PPSISFNKTI…GSDVESSSVL (95 aa)) folds into the Ig-like C2-type 2 domain. Residue asparagine 1191 is glycosylated (N-linked (GlcNAc...) asparagine). Cysteine 1215 and cysteine 1263 are disulfide-bonded. N-linked (GlcNAc...) asparagine glycans are attached at residues asparagine 1292, asparagine 1316, asparagine 1330, asparagine 1343, asparagine 1349, asparagine 1356, asparagine 1432, asparagine 1516, asparagine 1574, and asparagine 1591. The Ig-like C2-type 3 domain occupies 1296-1378 (PEHNHLSVVV…ATNALGKAVA (83 aa)). A disulfide bridge connects residues cysteine 1321 and cysteine 1367. TSP type-1 domains lie at 1424 to 1482 (QEPF…NIRD) and 1483 to 1545 (CPAR…HPCV). Positions 1597–1644 (CDVCWHTGPWKPCTAACGRGFQSRKVDCIHTRSCKPVAKRHCVQKKKP) constitute a TSP type-1 10 domain. A PLAC domain is found at 1655–1691 (CDRDCTDTTHYCMFVKHLNLCSLDRYKQRCCQSCQEG).

Glycosylated. Can be O-fucosylated by POFUT2 on a serine or a threonine residue found within the consensus sequence C1-X(2)-(S/T)-C2-G of the TSP type-1 repeat domains where C1 and C2 are the first and second cysteine residue of the repeat, respectively. Fucosylated repeats can then be further glycosylated by the addition of a beta-1,3-glucose residue by the glucosyltransferase, B3GALTL. Fucosylation mediates the efficient secretion of ADAMTS family members. Can also be C-glycosylated with one or two mannose molecules on tryptophan residues within the consensus sequence W-X-X-W of the TPRs, and N-glycosylated. These other glycosylations can also facilitate secretion. As to expression, expressed in epithelial cells of the colon, fallopian tube, skin, breast, prostate, epididymis, liver, pancreatic islets and bile ducts, as well as by vascular endothelial cells, smooth muscle cells, fibroblasts, cortical and ganglionic neurons and cardiac myocytes. Also expressed by malignant epithelial cells in colon cancer, as well as breast, prostate, renal and skin tumors. Expression is significantly reduced in colon cancer compared to normal colon.

It is found in the secreted. The protein localises to the extracellular space. The protein resides in the extracellular matrix. In Homo sapiens (Human), this protein is ADAMTS-like protein 3 (ADAMTSL3).